Here is a 148-residue protein sequence, read N- to C-terminus: Transcriptional regulator MraZ (148 aa).

2 consecutive SpoVT-AbrB domains span residues 5-53 and 82-125; these read ETAI…VEKE and SALL…SEQA.

It belongs to the MraZ family. As to quaternary structure, forms oligomers.

It is found in the cytoplasm. The protein resides in the nucleoid. The chain is Transcriptional regulator MraZ from Xylella fastidiosa (strain Temecula1 / ATCC 700964).